Reading from the N-terminus, the 289-residue chain is ATP phosphoribosyltransferase (289 aa).

This sequence belongs to the ATP phosphoribosyltransferase family. Long subfamily. Mg(2+) serves as cofactor.

It is found in the cytoplasm. The enzyme catalyses 1-(5-phospho-beta-D-ribosyl)-ATP + diphosphate = 5-phospho-alpha-D-ribose 1-diphosphate + ATP. The protein operates within amino-acid biosynthesis; L-histidine biosynthesis; L-histidine from 5-phospho-alpha-D-ribose 1-diphosphate: step 1/9. With respect to regulation, feedback inhibited by histidine. Functionally, catalyzes the condensation of ATP and 5-phosphoribose 1-diphosphate to form N'-(5'-phosphoribosyl)-ATP (PR-ATP). Has a crucial role in the pathway because the rate of histidine biosynthesis seems to be controlled primarily by regulation of HisG enzymatic activity. The chain is ATP phosphoribosyltransferase from Desulforudis audaxviator (strain MP104C).